Consider the following 278-residue polypeptide: Ethanolamine utilization protein EutJ (278 aa).

It belongs to the EutJ family.

It functions in the pathway amine and polyamine degradation; ethanolamine degradation. In terms of biological role, may protect ethanolamine ammonia-lyase (EAL, eutB-eutC) from inhibition, may function in assembling the bacterial microcompartment and/or in refolding EAL, suggesting it may have chaperone activity. The polypeptide is Ethanolamine utilization protein EutJ (eutJ) (Escherichia coli (strain K12)).